The following is a 583-amino-acid chain: Phosphoglucomutase, cytoplasmic 1 (583 aa).

Arg25 and Ser124 together coordinate alpha-D-glucose 1,6-bisphosphate. Ser124 acts as the Phosphoserine intermediate in catalysis. The Mg(2+) site is built by Ser124, Asp300, Asp302, and Asp304. At Ser124 the chain carries Phosphoserine. Residues Asp304, Arg305, Thr368, Glu387, Ser389, and Lys400 each coordinate alpha-D-glucose 1,6-bisphosphate.

Belongs to the phosphohexose mutase family. In terms of assembly, monomer. The cofactor is Mg(2+). Autophosphorylated. In terms of tissue distribution, mostly expressed in roots and coleoptiles, and, to a lower extent, in leaves, pollen and developing seeds.

Its subcellular location is the cytoplasm. The enzyme catalyses alpha-D-glucose 1-phosphate = alpha-D-glucose 6-phosphate. It catalyses the reaction O-phospho-L-seryl-[protein] + alpha-D-glucose 1-phosphate = alpha-D-glucose 1,6-bisphosphate + L-seryl-[protein]. It carries out the reaction alpha-D-glucose 1,6-bisphosphate + L-seryl-[protein] = O-phospho-L-seryl-[protein] + alpha-D-glucose 6-phosphate. Its function is as follows. Catalyzes the reversible isomerization of alpha-D-glucose 1-phosphate to alpha-D-glucose 6-phosphate. The mechanism proceeds via the intermediate compound alpha-D-glucose 1,6-bisphosphate. This enzyme participates in both the breakdown and synthesis of glucose. This is Phosphoglucomutase, cytoplasmic 1 from Zea mays (Maize).